We begin with the raw amino-acid sequence, 103 residues long: Protein translation factor SUI1 homolog (103 aa).

Belongs to the SUI1 family.

The polypeptide is Protein translation factor SUI1 homolog (Hyperthermus butylicus (strain DSM 5456 / JCM 9403 / PLM1-5)).